Consider the following 80-residue polypeptide: Conotoxin Bt6.5 (80 aa).

The first 22 residues, 1–22 (MKLTCVLIIAVLFLTACQLATA), serve as a signal peptide directing secretion. The propeptide occupies 23–45 (KTYSTGRQKHRALRSTDKNIKLS). Cystine bridges form between Cys-48-Cys-62, Cys-55-Cys-66, and Cys-61-Cys-73.

It belongs to the conotoxin O1 superfamily. As to expression, expressed by the venom duct.

The protein localises to the secreted. Its function is as follows. When injected intracranially in mice, induces a series of symptoms such as quivering, climbing, scratching, barrel rolling and paralysis of limbs. Unexpectedly, no effect is observed on ionic currents when tested on locust DUM neuron. This is Conotoxin Bt6.5 from Conus betulinus (Beech cone).